The primary structure comprises 678 residues: Glycine--tRNA ligase beta subunit (678 aa).

This sequence belongs to the class-II aminoacyl-tRNA synthetase family. In terms of assembly, tetramer of two alpha and two beta subunits.

It localises to the cytoplasm. It catalyses the reaction tRNA(Gly) + glycine + ATP = glycyl-tRNA(Gly) + AMP + diphosphate. The sequence is that of Glycine--tRNA ligase beta subunit from Streptococcus pneumoniae (strain Taiwan19F-14).